Here is a 33-residue protein sequence, read N- to C-terminus: ATP synthase 27 kDa subunit, mitochondrial (33 aa).

It localises to the mitochondrion. Its subcellular location is the mitochondrion inner membrane. Functionally, mitochondrial membrane ATP synthase (F(1)F(0) ATP synthase or Complex V) produces ATP from ADP in the presence of a proton gradient across the membrane which is generated by electron transport complexes of the respiratory chain. F-type ATPases consist of two structural domains, F(1) - containing the extramembraneous catalytic core and F(0) - containing the membrane proton channel, linked together by a central stalk and a peripheral stalk. During catalysis, ATP synthesis in the catalytic domain of F(1) is coupled via a rotary mechanism of the central stalk subunits to proton translocation. Part of the complex F(0) domain. In Solanum tuberosum (Potato), this protein is ATP synthase 27 kDa subunit, mitochondrial.